Here is a 2164-residue protein sequence, read N- to C-terminus: Genome polyprotein (2164 aa).

A lipid anchor (N-myristoyl glycine; by host) is attached at glycine 2. Over 2 to 1477 the chain is Cytoplasmic; it reads GAQVSRQNVG…DLGIANMTIG (1476 aa). The tract at residues 208-239 is disordered; the sequence is NVSVGYNHTHPGEQGREVVPSRTSSDNKRPSD. The amphipathic alpha-helix stretch occupies residues 572 to 588; it reads LTQNPVENYIDSVLNEV. Active-site for protease 2A activity residues include histidine 884 and aspartate 901. Positions 918 and 920 each coordinate Zn(2+). The active-site For protease 2A activity is cysteine 972. Residues cysteine 978 and histidine 980 each contribute to the Zn(2+) site. The membrane-binding stretch occupies residues 1104-1173; the sequence is SDSWLKKFTE…TIRLAPASVQ (70 aa). The interval 1104-1237 is oligomerization; the sequence is SDSWLKKFTE…SPGTGKSLAT (134 aa). The tract at residues 1125-1129 is RNA-binding; that stretch reads GQKIS. One can recognise an SF3 helicase domain in the interval 1197–1357; the sequence is EARRIKNLYI…KEYLLDGKLD (161 aa). 1227-1234 is a binding site for ATP; that stretch reads GSPGTGKS. 3 residues coordinate Zn(2+): cysteine 1365, cysteine 1376, and cysteine 1381. The segment at 1365–1381 adopts a C4-type; degenerate zinc-finger fold; sequence CDVNIKIGNAKCCPFIC. The RNA-binding stretch occupies residues 1408-1415; sequence EDRRRSSA. The oligomerization stretch occupies residues 1419 to 1424; that stretch reads MEAIFQ. The stretch at 1478–1493 is an intramembrane region; it reads IIANVVSIVGVIYIIY. Topologically, residues 1494–2164 are cytoplasmic; it reads KLFCTLQGPY…VLEHEWYEKF (671 aa). O-(5'-phospho-RNA)-tyrosine is present on tyrosine 1503. The Peptidase C3 domain maps to 1522–1700; the sequence is GPEEEFGRSL…FSAMLLKSYF (179 aa). Active-site for protease 3C activity residues include histidine 1561, glutamate 1592, and cysteine 1668. Residues 1932–2045 form the RdRp catalytic domain; that stretch reads ECLMAFDYSN…SYNFKLDMAV (114 aa). Mg(2+)-binding residues include aspartate 1938 and aspartate 2031.

Belongs to the picornaviruses polyprotein family. Interacts with capsid protein VP1 and capsid protein VP3 to form heterotrimeric protomers. As to quaternary structure, interacts with capsid protein VP0, and capsid protein VP3 to form heterotrimeric protomers. Five protomers subsequently associate to form pentamers which serve as building blocks for the capsid. Interacts with capsid protein VP2, capsid protein VP3 and capsid protein VP4 following cleavage of capsid protein VP0. In terms of assembly, interacts with capsid protein VP1 and capsid protein VP3 in the mature capsid. Interacts with capsid protein VP0 and capsid protein VP1 to form heterotrimeric protomers. Five protomers subsequently associate to form pentamers which serve as building blocks for the capsid. Interacts with capsid protein VP4 in the mature capsid. Interacts with protein 2C; this interaction may be important for virion morphogenesis. As to quaternary structure, interacts with capsid protein VP1 and capsid protein VP3. In terms of assembly, homodimer. Homohexamer; forms a hexameric ring structure with 6-fold symmetry characteristic of AAA+ ATPases. Interacts (via N-terminus) with host RTN3 (via reticulon domain); this interaction is important for viral replication. Interacts with capsid protein VP3; this interaction may be important for virion morphogenesis. As to quaternary structure, interacts with protein 3CD. In terms of assembly, homodimer. Interacts with host GBF1. Interacts (via GOLD domain) with host ACBD3 (via GOLD domain); this interaction allows the formation of a viral protein 3A/ACBD3 heterotetramer with a 2:2 stoichiometry, which will stimulate the recruitment of host PI4KB in order to synthesize PI4P at the viral RNA replication sites. Interacts with RNA-directed RNA polymerase. As to quaternary structure, interacts with protein 3AB and with RNA-directed RNA polymerase. In terms of assembly, interacts with Viral protein genome-linked and with protein 3CD. Mg(2+) serves as cofactor. In terms of processing, specific enzymatic cleavages in vivo by the viral proteases yield processing intermediates and the mature proteins. Myristoylation is required for the formation of pentamers during virus assembly. Further assembly of 12 pentamers and a molecule of genomic RNA generates the provirion. Post-translationally, during virion maturation, immature virions are rendered infectious following cleavage of VP0 into VP4 and VP2. This maturation seems to be an autocatalytic event triggered by the presence of RNA in the capsid and it is followed by a conformational change infectious virion. In terms of processing, myristoylation is required during RNA encapsidation and formation of the mature virus particle. VPg is uridylylated by the polymerase into VPg-pUpU. This acts as a nucleotide-peptide primer for the genomic RNA replication.

It localises to the virion. Its subcellular location is the host cytoplasm. The protein resides in the host cytoplasmic vesicle membrane. The protein localises to the host nucleus. It catalyses the reaction a ribonucleoside 5'-triphosphate + H2O = a ribonucleoside 5'-diphosphate + phosphate + H(+). The catalysed reaction is Selective cleavage of Tyr-|-Gly bond in the picornavirus polyprotein.. It carries out the reaction RNA(n) + a ribonucleoside 5'-triphosphate = RNA(n+1) + diphosphate. The enzyme catalyses Selective cleavage of Gln-|-Gly bond in the poliovirus polyprotein. In other picornavirus reactions Glu may be substituted for Gln, and Ser or Thr for Gly.. Its activity is regulated as follows. Replication or transcription is subject to high level of random mutations by the nucleotide analog ribavirin. In terms of biological role, forms an icosahedral capsid of pseudo T=3 symmetry with capsid proteins VP2 and VP3. The capsid is 300 Angstroms in diameter, composed of 60 copies of each capsid protein and enclosing the viral positive strand RNA genome. Capsid protein VP1 mainly forms the vertices of the capsid. Capsid protein VP1 interacts with host cell receptor to provide virion attachment to target host cells. This attachment induces virion internalization. Tyrosine kinases are probably involved in the entry process. After binding to its receptor, the capsid undergoes conformational changes. Capsid protein VP1 N-terminus (that contains an amphipathic alpha-helix) and capsid protein VP4 are externalized. Together, they shape a pore in the host membrane through which viral genome is translocated to host cell cytoplasm. Forms an icosahedral capsid of pseudo T=3 symmetry with capsid proteins VP2 and VP3. The capsid is 300 Angstroms in diameter, composed of 60 copies of each capsid protein and enclosing the viral positive strand RNA genome. Functionally, lies on the inner surface of the capsid shell. After binding to the host receptor, the capsid undergoes conformational changes. Capsid protein VP4 is released, Capsid protein VP1 N-terminus is externalized, and together, they shape a pore in the host membrane through which the viral genome is translocated into the host cell cytoplasm. Its function is as follows. Component of immature procapsids, which is cleaved into capsid proteins VP4 and VP2 after maturation. Allows the capsid to remain inactive before the maturation step. In terms of biological role, cysteine protease that cleaves viral polyprotein and specific host proteins. It is responsible for the autocatalytic cleavage between the P1 and P2 regions, which is the first cleavage occurring in the polyprotein. Also cleaves the host translation initiation factor EIF4G1, in order to shut down the capped cellular mRNA translation. Inhibits the host nucleus-cytoplasm protein and RNA trafficking by cleaving host members of the nuclear pores. Counteracts stress granule formation probably by antagonizing its assembly or promoting its dissassembly. Plays an essential role in the virus replication cycle by acting as a viroporin. Creates a pore in the host endoplasmic reticulum and as a consequence releases Ca2+ in the cytoplasm of infected cell. In turn, high levels of cytoplasmic calcium may trigger membrane trafficking and transport of viral ER-associated proteins to viroplasms, sites of viral genome replication. Functionally, induces and associates with structural rearrangements of intracellular membranes. Displays RNA-binding, nucleotide binding and NTPase activities. May play a role in virion morphogenesis and viral RNA encapsidation by interacting with the capsid protein VP3. Its function is as follows. Localizes the viral replication complex to the surface of membranous vesicles. Together with protein 3CD binds the Cis-Active RNA Element (CRE) which is involved in RNA synthesis initiation. Acts as a cofactor to stimulate the activity of 3D polymerase, maybe through a nucleid acid chaperone activity. In terms of biological role, localizes the viral replication complex to the surface of membranous vesicles. It inhibits host cell endoplasmic reticulum-to-Golgi apparatus transport and causes the disassembly of the Golgi complex, possibly through GBF1 interaction. This would result in depletion of MHC, trail receptors and IFN receptors at the host cell surface. Plays an essential role in viral RNA replication by recruiting ACBD3 and PI4KB at the viral replication sites, thereby allowing the formation of the rearranged membranous structures where viral replication takes place. Acts as a primer for viral RNA replication and remains covalently bound to viral genomic RNA. VPg is uridylylated prior to priming replication into VPg-pUpU. The oriI viral genomic sequence may act as a template for this. The VPg-pUpU is then used as primer on the genomic RNA poly(A) by the RNA-dependent RNA polymerase to replicate the viral genome. During genome replication, the VPg-RNA linkage is removed by the host TDP2, thereby accelerating replication. During the late stage of the replication cycle, host TDP2 is excluded from sites of viral RNA synthesis and encapsidation, allowing for the generation of progeny virions. Functionally, involved in the viral replication complex and viral polypeptide maturation. It exhibits protease activity with a specificity and catalytic efficiency that is different from protease 3C. Protein 3CD lacks polymerase activity. Protein 3CD binds to the 5'UTR of the viral genome. Its function is as follows. Replicates the viral genomic RNA on the surface of intracellular membranes. May form linear arrays of subunits that propagate along a strong head-to-tail interaction called interface-I. Covalently attaches UMP to a tyrosine of VPg, which is used to prime RNA synthesis. The positive stranded RNA genome is first replicated at virus induced membranous vesicles, creating a dsRNA genomic replication form. This dsRNA is then used as template to synthesize positive stranded RNA genomes. ss(+)RNA genomes are either translated, replicated or encapsidated. In terms of biological role, major viral protease that mediates proteolytic processing of the polyprotein. Cleaves host EIF5B, contributing to host translation shutoff. Also cleaves host PABPC1, contributing to host translation shutoff. Cleaves host NLRP1, triggers host N-glycine-mediated degradation of the autoinhibitory NLRP1 N-terminal fragment. The sequence is that of Genome polyprotein from Human rhinovirus A serotype 89 (strain 41467-Gallo) (HRV-89).